A 509-amino-acid polypeptide reads, in one-letter code: 2,3-bisphosphoglycerate-independent phosphoglycerate mutase (509 aa).

Residues aspartate 13 and serine 63 each contribute to the Mn(2+) site. The active-site Phosphoserine intermediate is serine 63. Residues histidine 124, 154-155, arginine 186, arginine 192, 261-264, and lysine 335 contribute to the substrate site; these read RD and RPDR. Mn(2+) is bound by residues aspartate 400, histidine 404, aspartate 441, histidine 442, and histidine 459.

The protein belongs to the BPG-independent phosphoglycerate mutase family. As to quaternary structure, monomer. The cofactor is Mn(2+).

The enzyme catalyses (2R)-2-phosphoglycerate = (2R)-3-phosphoglycerate. The protein operates within carbohydrate degradation; glycolysis; pyruvate from D-glyceraldehyde 3-phosphate: step 3/5. Its function is as follows. Catalyzes the interconversion of 2-phosphoglycerate and 3-phosphoglycerate. The polypeptide is 2,3-bisphosphoglycerate-independent phosphoglycerate mutase (Desulforudis audaxviator (strain MP104C)).